A 208-amino-acid polypeptide reads, in one-letter code: Uracil phosphoribosyltransferase (208 aa).

Residues Arg-78, Arg-103, and 130 to 138 (DPMFATGGT) contribute to the 5-phospho-alpha-D-ribose 1-diphosphate site. Uracil is bound by residues Ile-193 and 198-200 (GDA). Asp-199 lines the 5-phospho-alpha-D-ribose 1-diphosphate pocket.

It belongs to the UPRTase family. Mg(2+) serves as cofactor.

The enzyme catalyses UMP + diphosphate = 5-phospho-alpha-D-ribose 1-diphosphate + uracil. Its pathway is pyrimidine metabolism; UMP biosynthesis via salvage pathway; UMP from uracil: step 1/1. Its activity is regulated as follows. Allosterically activated by GTP. Its function is as follows. Catalyzes the conversion of uracil and 5-phospho-alpha-D-ribose 1-diphosphate (PRPP) to UMP and diphosphate. The sequence is that of Uracil phosphoribosyltransferase from Campylobacter jejuni subsp. jejuni serotype O:2 (strain ATCC 700819 / NCTC 11168).